Consider the following 510-residue polypeptide: Bifunctional purine biosynthesis protein PurH (510 aa).

Positions 1–144 (MSKRALISVT…KNYKDVIVVV (144 aa)) constitute an MGS-like domain.

It belongs to the PurH family.

It catalyses the reaction (6R)-10-formyltetrahydrofolate + 5-amino-1-(5-phospho-beta-D-ribosyl)imidazole-4-carboxamide = 5-formamido-1-(5-phospho-D-ribosyl)imidazole-4-carboxamide + (6S)-5,6,7,8-tetrahydrofolate. The enzyme catalyses IMP + H2O = 5-formamido-1-(5-phospho-D-ribosyl)imidazole-4-carboxamide. Its pathway is purine metabolism; IMP biosynthesis via de novo pathway; 5-formamido-1-(5-phospho-D-ribosyl)imidazole-4-carboxamide from 5-amino-1-(5-phospho-D-ribosyl)imidazole-4-carboxamide (10-formyl THF route): step 1/1. It functions in the pathway purine metabolism; IMP biosynthesis via de novo pathway; IMP from 5-formamido-1-(5-phospho-D-ribosyl)imidazole-4-carboxamide: step 1/1. This is Bifunctional purine biosynthesis protein PurH from Clostridioides difficile (strain 630) (Peptoclostridium difficile).